The primary structure comprises 505 residues: Lysine--tRNA ligase (505 aa).

Mg(2+) is bound by residues glutamate 415 and glutamate 422.

The protein belongs to the class-II aminoacyl-tRNA synthetase family. Homodimer. Requires Mg(2+) as cofactor.

It localises to the cytoplasm. It carries out the reaction tRNA(Lys) + L-lysine + ATP = L-lysyl-tRNA(Lys) + AMP + diphosphate. This is Lysine--tRNA ligase from Serratia proteamaculans (strain 568).